We begin with the raw amino-acid sequence, 672 residues long: Transmembrane 9 superfamily member 2 (672 aa).

Positions 1 to 18 (MKRGVWLLIYCYATLTKG) are cleaved as a signal peptide. The Extracellular segment spans residues 19–307 (FSLPGLSPTT…DKYLHIYDPQ (289 aa)). A helical membrane pass occupies residues 308 to 328 (IQWFSLINFSVIVILLSSVVM). Residues 329–383 (HSLLRALKSDLARYNELNLDNEFHEDSGWKLGHGDVFRTPSKSMLLSILVGSGMQ) lie on the Cytoplasmic side of the membrane. The helical transmembrane segment at 384–404 (LFLMVMCSIFFAAVGLVSPVS) threads the bilayer. Over 405-410 (RGSLPT) the chain is Extracellular. The helical transmembrane segment at 411-431 (VMFVLYALFGFVGSYASMGVY) threads the bilayer. The Cytoplasmic portion of the chain corresponds to 432-447 (KFFRGPYWKANMILTP). Residues 448 to 468 (ILLPGAIFLLIVIMNFFLLFA) traverse the membrane as a helical segment. The Extracellular segment spans residues 469–479 (HSSGVIPARSL). The helical transmembrane segment at 480–500 (FFIILLWFLVSVPLSFAGSIV) threads the bilayer. The Cytoplasmic segment spans residues 501–532 (AHKQCNWDEHPTKTNQIARQIPYQPWYLRTAQ). The helical transmembrane segment at 533 to 553 (ATLIAGIFSFGSIAVELYFIY) threads the bilayer. Topologically, residues 554-565 (SSLWFNKIFYMF) are extracellular. A helical membrane pass occupies residues 566–586 (GFLLFSFLLLTLTTSLVTILI). The Cytoplasmic segment spans residues 587–601 (TYYSLCLENWLWQWR). A helical transmembrane segment spans residues 602–622 (SFIIGGLGCSIYTFIHSILFT). Over 623-628 (KFKLGG) the chain is Extracellular. Residues 629-649 (VITVVLYLGYSLIISALCCVV) traverse the membrane as a helical segment. The Cytoplasmic segment spans residues 650–672 (TGAIGFFSSMFFIRKIYSAIKVE).

The protein belongs to the nonaspanin (TM9SF) (TC 9.A.2) family.

It localises to the vacuole membrane. In terms of biological role, with EMP70 and TMN3, plays a critical role in the late stages of a nutrient-controlled pathway notably regulating FLO11 gene expression. Acts downstream of RAS2 and TOR. Essential for cell adhesion and filamentous growth. May play a role as effector of cellular copper homeostasis. The polypeptide is Transmembrane 9 superfamily member 2 (TMN2) (Saccharomyces cerevisiae (strain ATCC 204508 / S288c) (Baker's yeast)).